We begin with the raw amino-acid sequence, 221 residues long: Protein lethal(2)k10201 (221 aa).

2 consecutive C2H2-type zinc fingers follow at residues 74-97 (YSCV…TEQH) and 113-138 (FSCF…IITH). The tract at residues 146-168 (FDHSKNRGKQKHQGKSKPNSMEV) is disordered. The segment covering 151–160 (NRGKQKHQGK) has biased composition (basic residues).

Its function is as follows. Vital for development. The chain is Protein lethal(2)k10201 (l(2)k10201) from Drosophila melanogaster (Fruit fly).